A 503-amino-acid polypeptide reads, in one-letter code: MSPSPALHAAAFQGIGAPDIQRFHINLSVGSNVNRYPAKQHARKVASKLGISRGLIYLVGKPTVFLDDSDQTIPFRQRRYFYYLSGANEPDCHLTYDIAKDHLTLYVPDFDLRQTVWMGPTISIGEALDRYDIDNARYAGSLQTDISGWLRLRGDDSQIILLHPDHRPPIEYEQDLFETKNLVPAMNAARGVKDSYEIEMIRKANIVSGLAHTAVLEKIGQMTNESDIAGLFLETCMTHGAPDQAYGIIAASGENGATLHYMKNNEDFGNRLSVCLDAGAEYECYASDVTRTFPISRTGEWPTPEVRDIYLAVERMQEECIRLIKPGVRFRDVHLHASRVAVEELLKLGVFQKDNSVDAIMASGAVSVFFPHGLGHHVGLEVHDVAEQSVMAATDDSSPRTRVRGFLMQPASAMSAALLEESMIVTVEPGIYFNRLALKNARTLPIARFIDFDVVERYYPIGGVRIEDDILVTATGYENLTTAPKGEEALDIIRRSSVKSSRA.

Mn(2+)-binding residues include D277, D288, E428, and E467.

Belongs to the peptidase M24B family. It depends on Mn(2+) as a cofactor.

It catalyses the reaction Release of any N-terminal amino acid, including proline, that is linked to proline, even from a dipeptide or tripeptide.. Catalyzes the removal of a penultimate prolyl residue from the N-termini of peptides. In Talaromyces stipitatus (strain ATCC 10500 / CBS 375.48 / QM 6759 / NRRL 1006) (Penicillium stipitatum), this protein is Probable Xaa-Pro aminopeptidase TSTA_094700.